We begin with the raw amino-acid sequence, 143 residues long: Anti-sigma F factor (143 aa).

This sequence belongs to the anti-sigma-factor family.

It catalyses the reaction L-seryl-[protein] + ATP = O-phospho-L-seryl-[protein] + ADP + H(+). It carries out the reaction L-threonyl-[protein] + ATP = O-phospho-L-threonyl-[protein] + ADP + H(+). Its function is as follows. Binds to sigma F and blocks its ability to form an RNA polymerase holoenzyme (E-sigma F). Phosphorylates SpoIIAA on a serine residue. This phosphorylation may enable SpoIIAA to act as an anti-anti-sigma factor that counteracts SpoIIAB and thus releases sigma F from inhibition. This Clostridium acetobutylicum (strain ATCC 824 / DSM 792 / JCM 1419 / IAM 19013 / LMG 5710 / NBRC 13948 / NRRL B-527 / VKM B-1787 / 2291 / W) protein is Anti-sigma F factor.